We begin with the raw amino-acid sequence, 306 residues long: Probable protein ABIL1 (306 aa).

The segment at 200–236 (KNSKTNGARQSEFVLEETKATKPASRGKEPSTSPLPK) is disordered.

The protein belongs to the ABI family. Binds SCAR.

It is found in the cytoplasm. Its subcellular location is the cytoskeleton. Its function is as follows. Involved in regulation of actin and microtubule organization. Part of a WAVE complex that activates the Arp2/3 complex. The protein is Probable protein ABIL1 of Oryza sativa subsp. japonica (Rice).